Consider the following 375-residue polypeptide: Alcohol dehydrogenase 1C (375 aa).

N-acetylserine is present on Ser2. Ser23 is subject to Phosphoserine. Zn(2+)-binding residues include Cys47, His68, Cys98, Cys101, Cys104, Cys112, and Cys175. NAD(+) contacts are provided by residues 200 to 205 (GLGGVG), Asp224, Lys229, Ile270, 293 to 295 (VGV), 318 to 320 (AIF), and Arg370.

Belongs to the zinc-containing alcohol dehydrogenase family. As to quaternary structure, dimer of identical or non-identical chains of class I alcohol dehydrogenase: ADH1A, ADH1B, and ADH1C. It depends on Zn(2+) as a cofactor. Expressed in kidney.

The protein resides in the cytoplasm. It carries out the reaction a primary alcohol + NAD(+) = an aldehyde + NADH + H(+). The enzyme catalyses ethanol + NAD(+) = acetaldehyde + NADH + H(+). Its function is as follows. Alcohol dehydrogenase. Exhibits high activity for ethanol oxidation and plays a major role in ethanol catabolism. This is Alcohol dehydrogenase 1C (ADH1C) from Papio hamadryas (Hamadryas baboon).